The following is a 157-amino-acid chain: Deoxyuridine 5'-triphosphate nucleotidohydrolase (157 aa).

Substrate contacts are provided by residues 76–78 (RSG), Asn89, 93–95 (TID), and Lys103.

Belongs to the dUTPase family. Mg(2+) is required as a cofactor.

The enzyme catalyses dUTP + H2O = dUMP + diphosphate + H(+). The protein operates within pyrimidine metabolism; dUMP biosynthesis; dUMP from dCTP (dUTP route): step 2/2. Functionally, this enzyme is involved in nucleotide metabolism: it produces dUMP, the immediate precursor of thymidine nucleotides and it decreases the intracellular concentration of dUTP so that uracil cannot be incorporated into DNA. This chain is Deoxyuridine 5'-triphosphate nucleotidohydrolase, found in Brucella abortus (strain 2308).